Here is a 208-residue protein sequence, read N- to C-terminus: Large ribosomal subunit protein bL25 (208 aa).

It belongs to the bacterial ribosomal protein bL25 family. CTC subfamily. In terms of assembly, part of the 50S ribosomal subunit; part of the 5S rRNA/L5/L18/L25 subcomplex. Contacts the 5S rRNA. Binds to the 5S rRNA independently of L5 and L18.

Its function is as follows. This is one of the proteins that binds to the 5S RNA in the ribosome where it forms part of the central protuberance. This is Large ribosomal subunit protein bL25 from Bordetella pertussis (strain Tohama I / ATCC BAA-589 / NCTC 13251).